Here is a 535-residue protein sequence, read N- to C-terminus: Suppressor of cytokine signaling 6 (535 aa).

Residues R80–G89 show a composition bias toward basic residues. The disordered stretch occupies residues R80 to S105. The SH2 domain occupies W384–V491. Residues R486 to Y535 form the SOCS box domain.

As to quaternary structure, interacts with RBCK1. Interacts with phosphorylated IRS4. Interacts with PIM3. Interacts with KIT (phosphorylated).

It participates in protein modification; protein ubiquitination. In terms of biological role, SOCS family proteins form part of a classical negative feedback system that regulates cytokine signal transduction. May be a substrate recognition component of a SCF-like ECS (Elongin BC-CUL2/5-SOCS-box protein) E3 ubiquitin-protein ligase complex which mediates the ubiquitination and subsequent proteasomal degradation of target proteins. Regulates KIT degradation by ubiquitination of the tyrosine-phosphorylated receptor. This chain is Suppressor of cytokine signaling 6 (SOCS6), found in Homo sapiens (Human).